Reading from the N-terminus, the 608-residue chain is ATP-citrate synthase beta chain protein 2 (608 aa).

ATP is bound by residues 214-234 and 265-291; these read ILRFNNIPQIKMMVVLGELGG and FKSEVQFGHAGAKSGGEMESAQAKNQA. E231 is a Mg(2+) binding site. Catalysis depends on H273, which acts as the Tele-phosphohistidine intermediate. 292 to 302 provides a ligand contact to CoA; it reads LIDAGAIVPTS.

The protein belongs to the succinate/malate CoA ligase alpha subunit family. In terms of assembly, heterooctamer of 4 alpha and 4 beta chains. In terms of tissue distribution, expressed in trichomes, epidermal leaf cells, anther tapetal cells, stigma and in young vascular bundles of expanding leaves, cotyledons, roots, pedicel of flowers and siliques.

It localises to the cytoplasm. The protein resides in the cytosol. It carries out the reaction oxaloacetate + acetyl-CoA + ADP + phosphate = citrate + ATP + CoA. Functionally, ATP citrate-lyase is the primary enzyme responsible for the synthesis of cytosolic acetyl-CoA, used for the elongation of fatty acids and biosynthesis of isoprenoids, flavonoids and malonated derivatives. May supply substrate to the cytosolic acetyl-CoA carboxylase, which generates the malonyl-CoA used for the synthesis of a multitude of compounds, including very long chain fatty acids and flavonoids. Required for normal growth and development and elongation of C18 fatty acids to C20 to C24 fatty acids in seeds. n contrast to all known animal ACL enzymes having a homomeric structure, plant ACLs are composed of alpha and beta chains. This is ATP-citrate synthase beta chain protein 2 from Arabidopsis thaliana (Mouse-ear cress).